The following is a 336-amino-acid chain: UbiA prenyltransferase domain-containing protein 1 (336 aa).

The interval M1–S22 is disordered. Residues A7–S22 are compositionally biased toward low complexity. Transmembrane regions (helical) follow at residues L79–V99, V129–F149, L158–L178, Y180–A200, H201–L221, L254–A274, and L315–L335.

Belongs to the UbiA prenyltransferase family.

The protein localises to the endoplasmic reticulum membrane. It is found in the golgi apparatus membrane. The protein resides in the mitochondrion membrane. It catalyses the reaction menadiol + (2E,6E,10E)-geranylgeranyl diphosphate = menaquinol-4 + diphosphate. The catalysed reaction is all-trans-decaprenyl diphosphate + 4-hydroxybenzoate = 4-hydroxy-3-(all-trans-decaprenyl)benzoate + diphosphate. It functions in the pathway quinol/quinone metabolism; menaquinone biosynthesis. Its pathway is cofactor biosynthesis; ubiquinone biosynthesis. Functionally, prenyltransferase that mediates the formation of menaquinone-4 (MK-4) and coenzyme Q10. MK-4 is a vitamin K2 isoform required for endothelial cell development. Mediates the conversion of phylloquinone (PK) into MK-4, probably by cleaving the side chain of phylloquinone (PK) to release 2-methyl-1,4-naphthoquinone (menadione; K3) and then prenylating it with geranylgeranyl pyrophosphate (GGPP) to form MK-4. Also plays a role in cardiovascular development independently of MK-4 biosynthesis, by acting as a coenzyme Q10 biosynthetic enzyme: coenzyme Q10, also named ubiquinone, plays an important antioxidant role in the cardiovascular system. Mediates biosynthesis of coenzyme Q10 in the Golgi membrane, leading to protect cardiovascular tissues from nos3/eNOS-dependent oxidative stress. In Danio rerio (Zebrafish), this protein is UbiA prenyltransferase domain-containing protein 1 (ubiad1).